A 213-amino-acid chain; its full sequence is GTP cyclohydrolase 1 (213 aa).

Residues cysteine 104, histidine 107, and cysteine 175 each contribute to the Zn(2+) site.

The protein belongs to the GTP cyclohydrolase I family. As to quaternary structure, homomer.

It catalyses the reaction GTP + H2O = 7,8-dihydroneopterin 3'-triphosphate + formate + H(+). Its pathway is cofactor biosynthesis; 7,8-dihydroneopterin triphosphate biosynthesis; 7,8-dihydroneopterin triphosphate from GTP: step 1/1. The sequence is that of GTP cyclohydrolase 1 from Brucella suis (strain ATCC 23445 / NCTC 10510).